A 157-amino-acid polypeptide reads, in one-letter code: Isotocin-neurophysin IT 1 (157 aa).

Positions Met-1–Ala-20 are cleaved as a signal peptide. A disulfide bridge links Cys-21 with Cys-26. Position 29 is a glycine amide (Gly-29). Disulfide bonds link Cys-42–Cys-86, Cys-45–Cys-59, Cys-53–Cys-76, Cys-60–Cys-66, Cys-93–Cys-106, Cys-100–Cys-118, and Cys-107–Cys-112.

It belongs to the vasopressin/oxytocin family. In terms of processing, seven disulfide bonds are present in neurophysin.

It is found in the secreted. Its function is as follows. Isotocin causes contraction of smooth muscles. This chain is Isotocin-neurophysin IT 1, found in Oncorhynchus keta (Chum salmon).